The primary structure comprises 227 residues: Cleavage and polyadenylation specificity factor subunit 5 (227 aa).

A Nudix hydrolase domain is found at 76–201; sequence MRRTVEGVLI…KLVAAPLFEL (126 aa). An interaction with RNA region spans residues 102-104; the sequence is TFF. A Nudix box motif is present at residues 109 to 130; it reads GELNPGEDEVEGLKRLMTEILG.

The protein belongs to the Nudix hydrolase family. CPSF5 subfamily. As to quaternary structure, homodimer (via N- and C-terminus); binds RNA as homodimer. Component of the cleavage factor Im (CFIm) complex.

The protein localises to the nucleus. Its subcellular location is the cytoplasm. Functionally, component of the cleavage factor Im (CFIm) complex that functions as an activator of the pre-mRNA 3'-end cleavage and polyadenylation processing required for the maturation of pre-mRNA into functional mRNAs. CFIm contributes to the recruitment of multiprotein complexes on specific sequences on the pre-mRNA 3'-end, so called cleavage and polyadenylation signals (pA signals). Most pre-mRNAs contain multiple pA signals, resulting in alternative cleavage and polyadenylation (APA) producing mRNAs with variable 3'-end formation. The CFIm complex acts as a key regulator of cleavage and polyadenylation site choice during APA through its binding to 5'-UGUA-3' elements localized in the 3'-untranslated region (UTR) for a huge number of pre-mRNAs. Binds to 5'-UGUA-3' elements localized upstream of pA signals that act as enhancers of pre-mRNA 3'-end processing. The homodimer mediates simultaneous sequence-specific recognition of two 5'-UGUA-3' elements within the pre-mRNA. Plays a role in somatic cell fate transitions and pluripotency by regulating widespread changes in gene expression through an APA-dependent function. Binds to chromatin. Binds to, but does not hydrolyze mono- and di-adenosine nucleotides. In Xenopus laevis (African clawed frog), this protein is Cleavage and polyadenylation specificity factor subunit 5.